Reading from the N-terminus, the 1322-residue chain is Sal-like protein 1 (1322 aa).

The interval 1–41 (MSRRKQAKPQHFQSDPEVASLPRRDGDTEKGQPSRPTKSKD) is disordered. Basic and acidic residues predominate over residues 22–41 (PRRDGDTEKGQPSRPTKSKD). Residues 43–65 (HVCGRCCAEFFELSDLLLHKKSC) form a C2H2-type 1; atypical zinc finger. The disordered stretch occupies residues 78 to 128 (PASPAKTFPPGPSLNDPDDQMKDAANKADQEDCSDLSEPKGLDREESMEVE). Basic and acidic residues-rich tracts occupy residues 96 to 107 (DQMKDAANKADQ) and 114 to 124 (SEPKGLDREES). A Glycyl lysine isopeptide (Lys-Gly) (interchain with G-Cter in SUMO2) cross-link involves residue Lys-440. 2 consecutive C2H2-type zinc fingers follow at residues 450-472 (HKCR…LRSH) and 478-500 (FKCN…FQRH). Residues 578 to 659 (PIPISHSAAS…GGPGGTTFTN (82 aa)) form a disordered region. Residues 584–594 (SAASPQGSVKS) show a composition bias toward polar residues. Phosphoserine occurs at positions 591, 594, and 596. Residues 629–645 (NMASSAVPTAGNSTLNS) are compositionally biased toward polar residues. Glycyl lysine isopeptide (Lys-Gly) (interchain with G-Cter in SUMO2) cross-links involve residues Lys-672, Lys-689, and Lys-700. C2H2-type zinc fingers lie at residues 705 to 727 (NECI…YRTH), 733 to 755 (FKCK…YSVH), and 765 to 787 (HSCP…IRMH). Disordered regions lie at residues 789–855 (GGQI…SSPL) and 891–961 (SMEG…GLSP). The segment covering 819–832 (DLDNFSDENMEECP) has biased composition (acidic residues). Positions 842-855 (SADASQDSLSSSPL) are enriched in low complexity. The segment covering 898–935 (TNDSSSVGGDMESQSAGSPAISESTSSMQALSPSNSTQ) has biased composition (polar residues). Basic and acidic residues predominate over residues 936–948 (EFHKSPGMEEKPQ). Ser-940 carries the phosphoserine modification. Glycyl lysine isopeptide (Lys-Gly) (interchain with G-Cter in SUMO2) cross-links involve residues Lys-946 and Lys-981. 2 consecutive C2H2-type zinc fingers follow at residues 1000-1022 (TACD…YRSH) and 1028-1050 (FICT…MLTH). Residue Lys-1085 forms a Glycyl lysine isopeptide (Lys-Gly) (interchain with G-Cter in SUMO2) linkage. The disordered stretch occupies residues 1094-1119 (VSPQDSKDAPTSHVPQGPLSSSATSP). 2 C2H2-type zinc fingers span residues 1133–1155 (HYCN…ERTH) and 1161–1183 (FACT…MGTH). Glycyl lysine isopeptide (Lys-Gly) (interchain with G-Cter in SUMO2) cross-links involve residues Lys-1218, Lys-1297, and Lys-1317.

The protein belongs to the sal C2H2-type zinc-finger protein family. As to quaternary structure, may associate with NuRD histone deacetylase complex (HDAC). Interacts with components of HDAC complex including HDAC1, HDAC2, RBBP4, RBPP7, MTA1 and MTA2. Interacts with CCNQ. Interacts with NSD2 (via PHD-type zinc fingers 1, 2 and 3). As to expression, expressed in the metanephric mesenchyme surrounding ureteric bud.

It is found in the nucleus. Transcriptional repressor involved in organogenesis. Plays an essential role in ureteric bud invasion during kidney development. This is Sal-like protein 1 (Sall1) from Mus musculus (Mouse).